The primary structure comprises 339 residues: Lipoate-protein ligase A (339 aa).

The region spanning 29-217 (PKKQSILFLW…AFFQHYGMKV (189 aa)) is the BPL/LPL catalytic domain. ATP-binding positions include Arg71, 76-79 (GAVF), and Lys135. A (R)-lipoate-binding site is contributed by Lys135.

The protein belongs to the LplA family. As to quaternary structure, monomer.

It localises to the cytoplasm. It carries out the reaction L-lysyl-[lipoyl-carrier protein] + (R)-lipoate + ATP = N(6)-[(R)-lipoyl]-L-lysyl-[lipoyl-carrier protein] + AMP + diphosphate + H(+). It participates in protein modification; protein lipoylation via exogenous pathway; protein N(6)-(lipoyl)lysine from lipoate: step 1/2. Its pathway is protein modification; protein lipoylation via exogenous pathway; protein N(6)-(lipoyl)lysine from lipoate: step 2/2. In terms of biological role, catalyzes both the ATP-dependent activation of exogenously supplied lipoate to lipoyl-AMP and the transfer of the activated lipoyl onto the lipoyl domains of lipoate-dependent enzymes. This is Lipoate-protein ligase A from Blochmanniella pennsylvanica (strain BPEN).